We begin with the raw amino-acid sequence, 129 residues long: SOSS complex subunit C homolog (129 aa).

Residues 105 to 129 (RLEPLPSPATTPTTPNAPPSHNISK) form a disordered region.

It belongs to the SOSS-C family.

In Drosophila erecta (Fruit fly), this protein is SOSS complex subunit C homolog.